Here is a 71-residue protein sequence, read N- to C-terminus: Conotoxin Pl071 (71 aa).

A signal peptide spans 1–20 (MSRLFMILLVICVITLGTDA). A propeptide spanning residues 21-31 (SQAEDSGTEKR) is cleaved from the precursor. Tyr69 is subject to Tyrosine amide.

The protein belongs to the conotoxin NSf-1 superfamily. As to expression, expressed by the venom duct.

The protein localises to the secreted. Functionally, probable neurotoxin with unknown target. Possibly targets ion channels. The protein is Conotoxin Pl071 of Conus planorbis (Planorbis cone).